Reading from the N-terminus, the 363-residue chain is Spore germination protein YndE (363 aa).

10 consecutive transmembrane segments (helical) span residues 8-28 (ITTA…GVLT), 41-61 (DGWI…MIIA), 84-104 (LGHL…AFEV), 113-133 (FFLL…WIGL), 149-169 (MIFP…LGIF), 189-209 (VKTT…VAFM), 218-238 (AVVI…IMVI), 273-293 (FLLV…FYAA), 305-325 (PLSC…MPKN), and 335-355 (TVSH…LVIS).

Belongs to the amino acid-polyamine-organocation (APC) superfamily. Spore germination protein (SGP) (TC 2.A.3.9) family.

The protein localises to the cell membrane. In terms of biological role, involved in the germinative response to L-alanine. Could be an amino acid transporter. This is Spore germination protein YndE (yndE) from Bacillus subtilis (strain 168).